The primary structure comprises 417 residues: UDP-N-acetylglucosamine 1-carboxyvinyltransferase (417 aa).

22–23 is a phosphoenolpyruvate binding site; it reads KN. A UDP-N-acetyl-alpha-D-glucosamine-binding site is contributed by R92. C116 (proton donor) is an active-site residue. C116 carries the post-translational modification 2-(S-cysteinyl)pyruvic acid O-phosphothioketal. Residues D304 and V326 each coordinate UDP-N-acetyl-alpha-D-glucosamine.

This sequence belongs to the EPSP synthase family. MurA subfamily.

The protein resides in the cytoplasm. The enzyme catalyses phosphoenolpyruvate + UDP-N-acetyl-alpha-D-glucosamine = UDP-N-acetyl-3-O-(1-carboxyvinyl)-alpha-D-glucosamine + phosphate. Its pathway is cell wall biogenesis; peptidoglycan biosynthesis. Functionally, cell wall formation. Adds enolpyruvyl to UDP-N-acetylglucosamine. This is UDP-N-acetylglucosamine 1-carboxyvinyltransferase from Syntrophotalea carbinolica (strain DSM 2380 / NBRC 103641 / GraBd1) (Pelobacter carbinolicus).